Reading from the N-terminus, the 209-residue chain is MIRFITIPDFADYQVTLKLMEDYVNKVISDHEPEIIYLVEHLEVYTAGTNYKQEELLNYGDIPVIYTGRGGKFTFHGPGQRVIYPILNLASPNRHKDLKLYIKMLEEWIINSLNYFGIKAYIIKDKVGIWVKVRKDEFAKIAAIGVRVRKWVTYHGVAINISTDLSKFSGIIPCGLENSLVTSLNQLGIHVEMSEFDKIIQTEFNKIFK.

One can recognise a BPL/LPL catalytic domain in the interval aspartate 30 to lysine 209. Residues arginine 69–histidine 76, alanine 143–glycine 145, and glycine 156–alanine 158 contribute to the substrate site. Cysteine 174 serves as the catalytic Acyl-thioester intermediate.

This sequence belongs to the LipB family.

The protein resides in the cytoplasm. It carries out the reaction octanoyl-[ACP] + L-lysyl-[protein] = N(6)-octanoyl-L-lysyl-[protein] + holo-[ACP] + H(+). It participates in protein modification; protein lipoylation via endogenous pathway; protein N(6)-(lipoyl)lysine from octanoyl-[acyl-carrier-protein]: step 1/2. In terms of biological role, catalyzes the transfer of endogenously produced octanoic acid from octanoyl-acyl-carrier-protein onto the lipoyl domains of lipoate-dependent enzymes. Lipoyl-ACP can also act as a substrate although octanoyl-ACP is likely to be the physiological substrate. This is Octanoyltransferase from Rickettsia africae (strain ESF-5).